Here is a 487-residue protein sequence, read N- to C-terminus: Histamine H1 receptor (487 aa).

Over 1-29 (MSLPNSSCLLEDKMCEGNKTTMASPQLMP) the chain is Extracellular. Asn5 and Asn18 each carry an N-linked (GlcNAc...) asparagine glycan. Residues 30-50 (LVVVLSTICLVTVGLNLLVLY) form a helical membrane-spanning segment. Over 51–64 (AVRSERKLHTVGNL) the chain is Cytoplasmic. The helical transmembrane segment at 65–89 (YIVSLSVADLIVGAVVMPMNILYLL) threads the bilayer. Over 90–97 (MSKWSLGR) the chain is Extracellular. A helical membrane pass occupies residues 98–123 (PLCLFWLSMDYVASTASIFSVFILCI). Cys100 and Cys180 are disulfide-bonded. Positions 107 and 112 each coordinate histamine. Residues 107 to 112 (DYVAST) are important for agonist binding. Residues 124 to 144 (DRYRSVQQPLRYLKYRTKTRA) are Cytoplasmic-facing. A phosphothreonine mark is found at Thr140 and Thr142. A helical transmembrane segment spans residues 145-164 (SATILGAWFLSFLWVIPILG). The Extracellular segment spans residues 165–188 (WNHFMQQTSVRREDKCETDFYDVT). The chain crosses the membrane as a helical span at residues 189–211 (WFKVMTAIINFYLPTLLMLWFYA). Asn198 serves as a coordination point for histamine. Residues 212-416 (KIYKAVRQHC…MNRERKAAKQ (205 aa)) lie on the Cytoplasmic side of the membrane. Position 230 is a phosphoserine (Ser230). The segment covering 238–261 (KLRPENPKGDAKKPGKESPWEVLK) has biased composition (basic and acidic residues). Residues 238–291 (KLRPENPKGDAKKPGKESPWEVLKRKPKDAGGGSVLKSPSQTPKEMKSPVVFSQ) are disordered. Residue Thr279 is modified to Phosphothreonine. Ser344 and Ser347 each carry phosphoserine. The interval 345 to 379 (EISEDQMLGDSQSFSRTDSDTTTETAPGKGKLRSG) is disordered. The span at 353-369 (GDSQSFSRTDSDTTTET) shows a compositional bias: polar residues. Phosphoserine is present on residues Ser380, Ser396, and Ser398. The helical transmembrane segment at 417 to 440 (LGFIMAAFILCWIPYFIFFMVIAF) threads the bilayer. The segment at 424-428 (FILCW) is important for agonist binding. Tyr431 provides a ligand contact to histamine. A disulfide bond links Cys441 and Cys444. Over 441-446 (CKNCCN) the chain is Extracellular. A helical transmembrane segment spans residues 447–469 (EHLHMFTIWLGYINSTLNPLIYP). The Cytoplasmic segment spans residues 470 to 487 (LCNENFKKTFKRILHIRS).

Belongs to the G-protein coupled receptor 1 family. Post-translationally, phosphorylation at sites in the second and third cytoplasmic loops independently contribute to agonist-induced receptor down-regulation.

It is found in the cell membrane. G-protein-coupled receptor for histamine, a biogenic amine that functions as an immune modulator and a neurotransmitter. Through the H1 receptor, histamine mediates the contraction of smooth muscles and increases capillary permeability due to contraction of terminal venules. Also mediates neurotransmission in the central nervous system and thereby regulates circadian rhythms, emotional and locomotor activities as well as cognitive functions. The polypeptide is Histamine H1 receptor (Homo sapiens (Human)).